Consider the following 75-residue polypeptide: Penaeidin-3k (75 aa).

Residues 1–19 form the signal peptide; the sequence is MRLVVCLVFLASFALVCQG. At Gln20 the chain carries Pyrrolidone carboxylic acid. Disulfide bonds link Cys44-Cys59, Cys48-Cys66, and Cys60-Cys67. Position 74 is a serine amide (Ser74).

The protein belongs to the penaeidin family.

Its subcellular location is the cytoplasmic granule. Antibacterial and antifungal activity. Presents chitin-binding activity. This chain is Penaeidin-3k, found in Penaeus setiferus (Atlantic white shrimp).